Reading from the N-terminus, the 385-residue chain is Hsp70/Hsp90 co-chaperone CNS1 (385 aa).

The interval 1–37 is disordered; the sequence is MSSVNANGGYTKPQKYVPGPGDPELPPQLSEFKDKTS. TPR repeat units follow at residues 83–116, 121–154, and 155–189; these read AENF…ECED, ESLY…NPKN, and VKCY…DPEN.

It belongs to the TTC4 family. Monomer. Component of Hsp70 and Hsp90 chaperone complexes. Interacts (via TPR repeats) with HSC82 and HSP82 (via C-terminal MEEVD pentapeptide). Interacts with CPR7, SSA1 and SPI1.

It localises to the cytoplasm. Co-chaperone that binds to the molecular chaperones Hsp90 (HSC82 and HSP82) and Hsp70 (SSA1). Stimulates SSA1 ATPase activity, but not Hsp90 ATPase activity. Involved in only a subset of Hsp90 functions. The protein is Hsp70/Hsp90 co-chaperone CNS1 (CNS1) of Saccharomyces cerevisiae (strain ATCC 204508 / S288c) (Baker's yeast).